We begin with the raw amino-acid sequence, 363 residues long: Pyrimidine monooxygenase RutA (363 aa).

FMN contacts are provided by residues 49–50 (IK), N115, E124, 140–141 (RY), and S190.

The protein belongs to the NtaA/SnaA/DszA monooxygenase family. RutA subfamily.

It carries out the reaction uracil + FMNH2 + NADH + O2 = (Z)-3-ureidoacrylate + FMN + NAD(+) + H2O + H(+). It catalyses the reaction thymine + FMNH2 + NADH + O2 = (Z)-2-methylureidoacrylate + FMN + NAD(+) + H2O + H(+). Functionally, catalyzes the pyrimidine ring opening between N-3 and C-4 by an unusual flavin hydroperoxide-catalyzed mechanism, adding oxygen atoms in the process to yield ureidoacrylate peracid, that immediately reacts with FMN forming ureidoacrylate and FMN-N(5)-oxide. The FMN-N(5)-oxide reacts spontaneously with NADH to produce FMN. Requires the flavin reductase RutF to regenerate FMN in vivo. The sequence is that of Pyrimidine monooxygenase RutA from Escherichia coli O127:H6 (strain E2348/69 / EPEC).